Reading from the N-terminus, the 509-residue chain is uncharacterized protein (509 aa).

The protein belongs to the MG032/MG096/MG288 family.

This is an uncharacterized protein from Mycoplasma pneumoniae (strain ATCC 29342 / M129 / Subtype 1) (Mycoplasmoides pneumoniae).